Reading from the N-terminus, the 90-residue chain is DNA-directed RNA polymerase subunit omega (90 aa).

The segment at 69-90 (RQEQQEQDAAELAAVSSITHNR) is disordered.

It belongs to the RNA polymerase subunit omega family. In terms of assembly, the RNAP catalytic core consists of 2 alpha, 1 beta, 1 beta' and 1 omega subunit. When a sigma factor is associated with the core the holoenzyme is formed, which can initiate transcription.

The catalysed reaction is RNA(n) + a ribonucleoside 5'-triphosphate = RNA(n+1) + diphosphate. Promotes RNA polymerase assembly. Latches the N- and C-terminal regions of the beta' subunit thereby facilitating its interaction with the beta and alpha subunits. This is DNA-directed RNA polymerase subunit omega from Aliivibrio fischeri (strain ATCC 700601 / ES114) (Vibrio fischeri).